The following is a 309-amino-acid chain: Protein FdhE (309 aa).

This sequence belongs to the FdhE family.

The protein localises to the cytoplasm. Functionally, necessary for formate dehydrogenase activity. The sequence is that of Protein FdhE from Escherichia coli O139:H28 (strain E24377A / ETEC).